The following is a 327-amino-acid chain: Delta(3,5)-Delta(2,4)-dienoyl-CoA isomerase, mitochondrial (327 aa).

The N-terminal 33 residues, 1–33 (MATAMTVSSKLRGLLMQQLRGTSQLYFNISLRS), are a transit peptide targeting the mitochondrion. A substrate-binding site is contributed by 115–119 (SGIDL). Lysine 147 carries the N6-acetyllysine modification. Glycine 173 contributes to the substrate binding site. Lysine 230 bears the N6-succinyllysine mark. At serine 267 the chain carries Phosphoserine. Lysine 316 is subject to N6-succinyllysine. The Microbody targeting signal signature appears at 325 to 327 (SKL). Lysine 326 is subject to N6-acetyllysine.

Belongs to the enoyl-CoA hydratase/isomerase family. In terms of assembly, homohexamer.

The protein localises to the mitochondrion. It localises to the peroxisome. The enzyme catalyses (3E,5Z)-octadienoyl-CoA = (2E,4E)-octadienoyl-CoA. It catalyses the reaction (3E,5Z,8Z,11Z,14Z)-eicosapentaenoyl-CoA = (2E,4E,8Z,11Z,14Z)-eicosapentaenoyl-CoA. It participates in lipid metabolism; fatty acid beta-oxidation. Functionally, isomerization of 3-trans,5-cis-dienoyl-CoA to 2-trans,4-trans-dienoyl-CoA. The polypeptide is Delta(3,5)-Delta(2,4)-dienoyl-CoA isomerase, mitochondrial (Mus musculus (Mouse)).